A 93-amino-acid chain; its full sequence is UPF0473 protein YrzB (93 aa).

This sequence belongs to the UPF0473 family.

The chain is UPF0473 protein YrzB (yrzB) from Bacillus subtilis (strain 168).